A 569-amino-acid polypeptide reads, in one-letter code: GATOR1 complex protein NPRL3 (569 aa).

Disordered stretches follow at residues 27–60 (PFQR…EQDG) and 416–477 (PSEE…GDSP). 2 stretches are compositionally biased toward polar residues: residues 34-52 (HPAS…SNTG) and 438-468 (SLST…NSSA). Residue Ser-476 is modified to Phosphoserine.

Belongs to the NPR3 family. Within the GATOR complex, component of the GATOR1 subcomplex, made of DEPDC5, NPRL2 and NPRL3. GATOR1 mediates the strong interaction of the GATOR complex with small GTPases Rag (RagA/RRAGA, RagB/RRAGB, RagC/RRAGC and/or RagD/RRAGD) heterodimers. GATOR1 interacts with GPR155/LYCHOS; interaction takes place in presence of cholesterol and prevents interaction between GATOR1 and KICSTOR. Widely expressed. Expressed in the frontal lobe cortex as well as in the temporal, parietal, and occipital lobes.

It is found in the lysosome membrane. Its function is as follows. As a component of the GATOR1 complex functions as an inhibitor of the amino acid-sensing branch of the mTORC1 pathway. In response to amino acid depletion, the GATOR1 complex has GTPase activating protein (GAP) activity and strongly increases GTP hydrolysis by RagA/RRAGA (or RagB/RRAGB) within heterodimeric Rag complexes, thereby turning them into their inactive GDP-bound form, releasing mTORC1 from lysosomal surface and inhibiting mTORC1 signaling. In the presence of abundant amino acids, the GATOR1 complex is negatively regulated by GATOR2, the other GATOR subcomplex, in this amino acid-sensing branch of the TORC1 pathway. In Homo sapiens (Human), this protein is GATOR1 complex protein NPRL3.